The following is a 181-amino-acid chain: Inner membrane-spanning protein YciB (181 aa).

5 helical membrane-spanning segments follow: residues 8–28 (FPII…ATAA), 53–73 (ITLI…NAIF), 76–96 (WKPT…HFFG), 121–141 (LSWA…VYNF), and 149–169 (FKLF…AFYI).

It belongs to the YciB family.

It localises to the cell inner membrane. Functionally, plays a role in cell envelope biogenesis, maintenance of cell envelope integrity and membrane homeostasis. The protein is Inner membrane-spanning protein YciB of Coxiella burnetii (strain CbuK_Q154) (Coxiella burnetii (strain Q154)).